The chain runs to 256 residues: Trans-aconitate 2-methyltransferase (256 aa).

Belongs to the methyltransferase superfamily. Tam family.

The protein resides in the cytoplasm. It carries out the reaction trans-aconitate + S-adenosyl-L-methionine = (E)-3-(methoxycarbonyl)pent-2-enedioate + S-adenosyl-L-homocysteine. Catalyzes the S-adenosylmethionine monomethyl esterification of trans-aconitate. This Rhizobium etli (strain ATCC 51251 / DSM 11541 / JCM 21823 / NBRC 15573 / CFN 42) protein is Trans-aconitate 2-methyltransferase.